Here is a 375-residue protein sequence, read N- to C-terminus: Sulfite efflux pump SSU1 (375 aa).

Topologically, residues 1 to 25 (MPSGSGFHNIEEAGEKARKRDDWIA) are cytoplasmic. Residues 26-46 (ISNFHPGWFSVNMGTGITAIL) form a helical membrane-spanning segment. At 47-59 (LQNLPYQFPGLHY) the chain is on the extracellular side. The chain crosses the membrane as a helical span at residues 60 to 80 (IAVILFILNVIIFFLFLTISI). The Cytoplasmic segment spans residues 81-101 (TRYCLWPDKFKAMLAHPAHSM). The helical transmembrane segment at 102-122 (LLGTFPMGFATIINCIVFICV) threads the bilayer. Residues 123–135 (PVWGEWASRFAWG) lie on the Extracellular side of the membrane. A helical membrane pass occupies residues 136–156 (LWWIDAAVSVAICYFVPFMLM). At 157 to 167 (TKHTSSLETMT) the chain is on the cytoplasmic side. A helical membrane pass occupies residues 168–188 (AAWLLPIVAPVVAAASGGVVA). Over 189-200 (DSLQNDTHALIT) the chain is Extracellular. The N-linked (GlcNAc...) asparagine glycan is linked to Asn193. The chain crosses the membrane as a helical span at residues 201-221 (ILVCYVMWGSAVPLAMVILVI). At 222–234 (YFQRLAIHKLVPR) the chain is on the cytoplasmic side. A helical transmembrane segment spans residues 235–255 (AAIVSALLPIGPLGQGGFGLM). Topologically, residues 256-277 (QLGVVAKRVFPRLDFLAPIAGD) are extracellular. Residues 278-298 (IFYVMGAFIAMIMWGFGLIWL) traverse the membrane as a helical segment. Residues 299 to 309 (WFALASFTRGK) are Cytoplasmic-facing. A helical transmembrane segment spans residues 310 to 330 (FYFNIGWWAFTFPLGVFTTAT). Residues 331–343 (TQMGKEFNSPFFD) lie on the Extracellular side of the membrane. The helical transmembrane segment at 344-364 (ILGTFFSIVVTCMWVLVFALT) threads the bilayer. Topologically, residues 365–375 (VYKSCTKELFR) are cytoplasmic.

This sequence belongs to the tellurite-resistance/dicarboxylate transporter (TDT) family.

The protein resides in the cell membrane. In terms of biological role, sulphite efflux pump required for the secretion of sulphite as a reducing agent. In the presence of sulphite, cystine in keratin is directly cleaved to cysteine and S-sulphocysteine, and thereby, reduced proteins become accessible to hydrolysis by a variety of secreted endo- and exoproteases. Excretion of sulphite mediated by an efflux pump also represents a detoxification pathway for dermatophytes during infection of the epidermal stratum corneum, hair and nails, which are rich in cysteine. This Arthroderma benhamiae (strain ATCC MYA-4681 / CBS 112371) (Trichophyton mentagrophytes) protein is Sulfite efflux pump SSU1.